The following is a 294-amino-acid chain: 4-hydroxy-tetrahydrodipicolinate synthase (294 aa).

Position 45 (Thr-45) interacts with pyruvate. Tyr-133 (proton donor/acceptor) is an active-site residue. Lys-162 functions as the Schiff-base intermediate with substrate in the catalytic mechanism. Ile-204 provides a ligand contact to pyruvate.

This sequence belongs to the DapA family. As to quaternary structure, homotetramer; dimer of dimers.

It is found in the cytoplasm. The enzyme catalyses L-aspartate 4-semialdehyde + pyruvate = (2S,4S)-4-hydroxy-2,3,4,5-tetrahydrodipicolinate + H2O + H(+). Its pathway is amino-acid biosynthesis; L-lysine biosynthesis via DAP pathway; (S)-tetrahydrodipicolinate from L-aspartate: step 3/4. Catalyzes the condensation of (S)-aspartate-beta-semialdehyde [(S)-ASA] and pyruvate to 4-hydroxy-tetrahydrodipicolinate (HTPA). This Rhizobium meliloti (strain 1021) (Ensifer meliloti) protein is 4-hydroxy-tetrahydrodipicolinate synthase.